Reading from the N-terminus, the 450-residue chain is Phosphoglucosamine mutase (450 aa).

Catalysis depends on S104, which acts as the Phosphoserine intermediate. 4 residues coordinate Mg(2+): S104, D241, D243, and D245. S104 is modified (phosphoserine).

It belongs to the phosphohexose mutase family. The cofactor is Mg(2+). Post-translationally, activated by phosphorylation.

It catalyses the reaction alpha-D-glucosamine 1-phosphate = D-glucosamine 6-phosphate. In terms of biological role, catalyzes the conversion of glucosamine-6-phosphate to glucosamine-1-phosphate. The protein is Phosphoglucosamine mutase of Renibacterium salmoninarum (strain ATCC 33209 / DSM 20767 / JCM 11484 / NBRC 15589 / NCIMB 2235).